The chain runs to 111 residues: Ig kappa chain V-III region PC 2413 (111 aa).

A framework-1 region spans residues 1–23 (DIVLTQSPASLAVSLGQRATISC). A disulfide bridge connects residues Cys-23 and Cys-92. The complementarity-determining-1 stretch occupies residues 24–38 (RASESVVNYGVSLMH). Residues 39-53 (WFQQKPGQPPKLLIY) are framework-2. The tract at residues 54 to 60 (GASNRGS) is complementarity-determining-2. The framework-3 stretch occupies residues 61-92 (GVPARFSGSGSGTDFSLIIHPMEEDDSAMYFC). Positions 93-101 (HQTKEVPWT) are complementarity-determining-3. Residues 102–111 (FGGGTDLEIE) are framework-4.

This Mus musculus (Mouse) protein is Ig kappa chain V-III region PC 2413.